The sequence spans 332 residues: Myogenic-determination protein (332 aa).

The segment at 22–54 (HNGYGQPTHPGYGFSAYSQQNPIAHPGQNPHQT) is disordered. One can recognise a bHLH domain in the interval 161–212 (DRRKAATMRERRRLRKVNEAFEILKRRTSSNPNQRLPKVEILRNAIEYIESL). A compositionally biased stretch (polar residues) spans 293-309 (TTSPIQNKATPSASDTQ). The segment at 293–332 (TTSPIQNKATPSASDTQSPPSSGATAPTSLHVNFKRKCST) is disordered. The span at 310-321 (SPPSSGATAPTS) shows a compositional bias: low complexity.

As to quaternary structure, efficient DNA binding requires dimerization with another bHLH protein.

The protein resides in the nucleus. May play an important role in the early development of muscle. This Drosophila melanogaster (Fruit fly) protein is Myogenic-determination protein (nau).